Consider the following 179-residue polypeptide: Hypoxanthine-guanine phosphoribosyltransferase (179 aa).

2 residues coordinate diphosphate: Lys42 and Gly43. Residues Glu98 and Asp99 each contribute to the Mg(2+) site. The active-site Proton acceptor is the Glu102. GMP is bound by residues Lys130, 151–152 (FV), and Asp158. A diphosphate-binding site is contributed by Arg164.

This sequence belongs to the purine/pyrimidine phosphoribosyltransferase family. Mg(2+) is required as a cofactor.

It is found in the cytoplasm. The enzyme catalyses IMP + diphosphate = hypoxanthine + 5-phospho-alpha-D-ribose 1-diphosphate. It carries out the reaction GMP + diphosphate = guanine + 5-phospho-alpha-D-ribose 1-diphosphate. Its pathway is purine metabolism; IMP biosynthesis via salvage pathway; IMP from hypoxanthine: step 1/1. It participates in purine metabolism; GMP biosynthesis via salvage pathway; GMP from guanine: step 1/1. Functionally, purine salvage pathway enzyme that catalyzes the transfer of the ribosyl-5-phosphate group from 5-phospho-alpha-D-ribose 1-diphosphate (PRPP) to the N9 position of the 6-oxopurines hypoxanthine and guanine to form the corresponding ribonucleotides IMP (inosine 5'-monophosphate) and GMP (guanosine 5'-monophosphate), with the release of PPi. In Staphylococcus epidermidis (strain ATCC 35984 / DSM 28319 / BCRC 17069 / CCUG 31568 / BM 3577 / RP62A), this protein is Hypoxanthine-guanine phosphoribosyltransferase (hpt).